Here is a 121-residue protein sequence, read N- to C-terminus: Fluoride-specific ion channel FluC 3 (121 aa).

Transmembrane regions (helical) follow at residues 3 to 23, 40 to 60, 69 to 89, and 101 to 121; these read VFLP…RYLL, FTIN…ALGG, VLAT…NEMV, and AAYL…GFLV. 2 residues coordinate Na(+): G76 and S79.

It belongs to the fluoride channel Fluc/FEX (TC 1.A.43) family.

The protein resides in the cell membrane. The enzyme catalyses fluoride(in) = fluoride(out). Its activity is regulated as follows. Na(+) is not transported, but it plays an essential structural role and its presence is essential for fluoride channel function. In terms of biological role, fluoride-specific ion channel. Important for reducing fluoride concentration in the cell, thus reducing its toxicity. This Bifidobacterium longum (strain NCC 2705) protein is Fluoride-specific ion channel FluC 3.